The following is a 94-amino-acid chain: Pyrimidine/purine nucleoside phosphorylase (94 aa).

The protein belongs to the nucleoside phosphorylase PpnP family.

The catalysed reaction is a purine D-ribonucleoside + phosphate = a purine nucleobase + alpha-D-ribose 1-phosphate. It catalyses the reaction adenosine + phosphate = alpha-D-ribose 1-phosphate + adenine. It carries out the reaction cytidine + phosphate = cytosine + alpha-D-ribose 1-phosphate. The enzyme catalyses guanosine + phosphate = alpha-D-ribose 1-phosphate + guanine. The catalysed reaction is inosine + phosphate = alpha-D-ribose 1-phosphate + hypoxanthine. It catalyses the reaction thymidine + phosphate = 2-deoxy-alpha-D-ribose 1-phosphate + thymine. It carries out the reaction uridine + phosphate = alpha-D-ribose 1-phosphate + uracil. The enzyme catalyses xanthosine + phosphate = alpha-D-ribose 1-phosphate + xanthine. Functionally, catalyzes the phosphorolysis of diverse nucleosides, yielding D-ribose 1-phosphate and the respective free bases. Can use uridine, adenosine, guanosine, cytidine, thymidine, inosine and xanthosine as substrates. Also catalyzes the reverse reactions. In Salmonella heidelberg (strain SL476), this protein is Pyrimidine/purine nucleoside phosphorylase.